We begin with the raw amino-acid sequence, 616 residues long: Elongation factor 4 (616 aa).

The 187-residue stretch at 17 to 203 (ERIRNFCIIA…RVCELVPAPV (187 aa)) folds into the tr-type G domain. Residues 29-34 (DHGKST) and 150-153 (NKID) each bind GTP.

Belongs to the TRAFAC class translation factor GTPase superfamily. Classic translation factor GTPase family. LepA subfamily.

It localises to the cell membrane. It catalyses the reaction GTP + H2O = GDP + phosphate + H(+). Required for accurate and efficient protein synthesis under certain stress conditions. May act as a fidelity factor of the translation reaction, by catalyzing a one-codon backward translocation of tRNAs on improperly translocated ribosomes. Back-translocation proceeds from a post-translocation (POST) complex to a pre-translocation (PRE) complex, thus giving elongation factor G a second chance to translocate the tRNAs correctly. Binds to ribosomes in a GTP-dependent manner. The sequence is that of Elongation factor 4 from Corynebacterium jeikeium (strain K411).